A 435-amino-acid polypeptide reads, in one-letter code: tRNA modification GTPase MnmE (435 aa).

(6S)-5-formyl-5,6,7,8-tetrahydrofolate contacts are provided by Arg-20, Glu-77, and Lys-117. The 146-residue stretch at 214-359 (GFKIVIVGAP…FMKELESFCL (146 aa)) folds into the TrmE-type G domain. GTP-binding positions include 224–229 (NSGKSS), 243–249 (TEEAGTT), and 268–271 (DTAG). Mg(2+) contacts are provided by Ser-228 and Thr-249. Position 435 (Lys-435) interacts with (6S)-5-formyl-5,6,7,8-tetrahydrofolate.

The protein belongs to the TRAFAC class TrmE-Era-EngA-EngB-Septin-like GTPase superfamily. TrmE GTPase family. In terms of assembly, homodimer. Heterotetramer of two MnmE and two MnmG subunits. Requires K(+) as cofactor.

The protein localises to the cytoplasm. Its function is as follows. Exhibits a very high intrinsic GTPase hydrolysis rate. Involved in the addition of a carboxymethylaminomethyl (cmnm) group at the wobble position (U34) of certain tRNAs, forming tRNA-cmnm(5)s(2)U34. This is tRNA modification GTPase MnmE from Bartonella henselae (strain ATCC 49882 / DSM 28221 / CCUG 30454 / Houston 1) (Rochalimaea henselae).